Reading from the N-terminus, the 84-residue chain is U8-theraphotoxin-Hhn1c 2 (84 aa).

Positions 1–21 are cleaved as a signal peptide; sequence MKVVLLVCLVWMMAMMELVSC. Disulfide bonds link Cys23–Cys35, Cys29–Cys44, Cys34–Cys67, Cys54–Cys75, and Cys69–Cys81.

The protein belongs to the AVIT (prokineticin) family. As to expression, expressed by the venom gland.

The protein localises to the secreted. The protein is U8-theraphotoxin-Hhn1c 2 of Cyriopagopus hainanus (Chinese bird spider).